We begin with the raw amino-acid sequence, 157 residues long: MNLNATLIAQLVVFFILAWFTMKFVWPPIVKALDERAKKIADGLAAADKAKADLALAEKKVVEELRKARESAGDVRASAEKQASQLVDEARAEASRIIAQAREAAEAEAGAAAQRAKEALRDQVAHLAVAGAEKILRREINAQVHAELLANLKQELQ.

The helical transmembrane segment at 7-27 threads the bilayer; the sequence is LIAQLVVFFILAWFTMKFVWP.

It belongs to the ATPase B chain family. F-type ATPases have 2 components, F(1) - the catalytic core - and F(0) - the membrane proton channel. F(1) has five subunits: alpha(3), beta(3), gamma(1), delta(1), epsilon(1). F(0) has three main subunits: a(1), b(2) and c(10-14). The alpha and beta chains form an alternating ring which encloses part of the gamma chain. F(1) is attached to F(0) by a central stalk formed by the gamma and epsilon chains, while a peripheral stalk is formed by the delta and b chains.

The protein localises to the cell inner membrane. Functionally, f(1)F(0) ATP synthase produces ATP from ADP in the presence of a proton or sodium gradient. F-type ATPases consist of two structural domains, F(1) containing the extramembraneous catalytic core and F(0) containing the membrane proton channel, linked together by a central stalk and a peripheral stalk. During catalysis, ATP synthesis in the catalytic domain of F(1) is coupled via a rotary mechanism of the central stalk subunits to proton translocation. Component of the F(0) channel, it forms part of the peripheral stalk, linking F(1) to F(0). The protein is ATP synthase subunit b of Azoarcus sp. (strain BH72).